Reading from the N-terminus, the 344-residue chain is L-rhamnose-proton symporter (344 aa).

The next 10 helical transmembrane spans lie at 4–24 (AITM…CFYA), 38–58 (WSVG…ALLL), 68–88 (FSLS…IGNI), 101–121 (MGIG…TPII), 137–157 (TLLG…AGQL), 175–195 (LVLA…MNAA), 214–234 (LPSY…FCFI), 259–279 (VLLS…YAWG), 290–310 (ISWM…GLVL), and 323–343 (VLSL…IGMA).

It belongs to the L-rhamnose transporter (TC 2.A.7.6) family.

It localises to the cell inner membrane. It carries out the reaction L-rhamnopyranose(in) + H(+)(in) = L-rhamnopyranose(out) + H(+)(out). In terms of biological role, uptake of L-rhamnose across the cytoplasmic membrane with the concomitant transport of protons into the cell (symport system). The protein is L-rhamnose-proton symporter of Shigella boydii serotype 18 (strain CDC 3083-94 / BS512).